A 914-amino-acid chain; its full sequence is Trafficking kinesin-binding protein 2 (914 aa).

Polar residues predominate over residues 1–21; sequence MSQSQNAIFTSPTGEENLMNS. A disordered region spans residues 1 to 30; the sequence is MSQSQNAIFTSPTGEENLMNSNHRDSESIT. Residues 48–353 enclose the HAP1 N-terminal domain; that stretch reads EEQLPQYRLK…QEEIKELRSR (306 aa). The stretch at 134–354 forms a coiled coil; sequence QALLKRNHVL…EEIKELRSRS (221 aa). The tract at residues 359-509 is interaction with HGS; the sequence is HLYFSQSYGA…KQFFAEEWQR (151 aa). Serine 420 is modified (phosphoserine). 2 disordered regions span residues 447 to 482 and 765 to 787; these read QQTE…DSDL and QPLP…SPCP. A compositionally biased stretch (polar residues) spans 454 to 471; it reads LLNQGSSSEEVAGSSQKM. The span at 775–787 shows a compositional bias: pro residues; it reads STPPNSPSHSPCP.

Belongs to the milton family. Interacts with GABA-A receptor and O-GlcNAc transferase. Interacts with HGS. Interacts with RHOT1/Miro-1 and RHOT2/Miro-2. Post-translationally, O-glycosylated. Widely expressed, with highest expression in heart.

It is found in the cytoplasm. Its subcellular location is the early endosome. It localises to the mitochondrion. In terms of biological role, may regulate endosome-to-lysosome trafficking of membrane cargo, including EGFR. The chain is Trafficking kinesin-binding protein 2 (TRAK2) from Homo sapiens (Human).